We begin with the raw amino-acid sequence, 191 residues long: Ribonuclease HII (191 aa).

In terms of domain architecture, RNase H type-2 spans isoleucine 16–leucine 191. Positions 22, 23, and 110 each coordinate a divalent metal cation.

Belongs to the RNase HII family. Requires Mn(2+) as cofactor. It depends on Mg(2+) as a cofactor.

The protein localises to the cytoplasm. The enzyme catalyses Endonucleolytic cleavage to 5'-phosphomonoester.. In terms of biological role, endonuclease that specifically degrades the RNA of RNA-DNA hybrids. In Campylobacter jejuni subsp. jejuni serotype O:2 (strain ATCC 700819 / NCTC 11168), this protein is Ribonuclease HII (rnhB).